A 285-amino-acid polypeptide reads, in one-letter code: Diphthine methyl ester synthase (285 aa).

S-adenosyl-L-methionine is bound by residues Leu9, Asp84, Gly87, 112–113, and Leu163; that span reads SI. Ser171 carries the post-translational modification Phosphoserine. The S-adenosyl-L-methionine site is built by Val225 and His250.

The protein belongs to the diphthine synthase family.

It carries out the reaction 2-[(3S)-amino-3-carboxypropyl]-L-histidyl-[translation elongation factor 2] + 4 S-adenosyl-L-methionine = diphthine methyl ester-[translation elongation factor 2] + 4 S-adenosyl-L-homocysteine + 3 H(+). It functions in the pathway protein modification; peptidyl-diphthamide biosynthesis. Functionally, S-adenosyl-L-methionine-dependent methyltransferase that catalyzes four methylations of the modified target histidine residue in translation elongation factor 2 (EF-2), to form an intermediate called diphthine methyl ester. The four successive methylation reactions represent the second step of diphthamide biosynthesis. This is Diphthine methyl ester synthase (DPH5) from Bos taurus (Bovine).